Here is a 187-residue protein sequence, read N- to C-terminus: GTP cyclohydrolase 1 (187 aa).

Residues cysteine 76, histidine 79, and cysteine 148 each coordinate Zn(2+).

Belongs to the GTP cyclohydrolase I family. In terms of assembly, toroid-shaped homodecamer, composed of two pentamers of five dimers.

It catalyses the reaction GTP + H2O = 7,8-dihydroneopterin 3'-triphosphate + formate + H(+). The protein operates within cofactor biosynthesis; 7,8-dihydroneopterin triphosphate biosynthesis; 7,8-dihydroneopterin triphosphate from GTP: step 1/1. In Streptococcus agalactiae serotype V (strain ATCC BAA-611 / 2603 V/R), this protein is GTP cyclohydrolase 1.